The chain runs to 580 residues: NADH-quinone oxidoreductase subunit C/D (580 aa).

Positions 1–171 (MSFDQVIADA…PPFVLTDRLF (171 aa)) are NADH dehydrogenase I subunit C. The NADH dehydrogenase I subunit D stretch occupies residues 195 to 580 (ELMVLNFGPH…IDFVMSDVDR (386 aa)).

In the N-terminal section; belongs to the complex I 30 kDa subunit family. It in the C-terminal section; belongs to the complex I 49 kDa subunit family. As to quaternary structure, NDH-1 is composed of 13 different subunits. Subunits NuoB, CD, E, F, and G constitute the peripheral sector of the complex.

It localises to the cell inner membrane. The catalysed reaction is a quinone + NADH + 5 H(+)(in) = a quinol + NAD(+) + 4 H(+)(out). Functionally, NDH-1 shuttles electrons from NADH, via FMN and iron-sulfur (Fe-S) centers, to quinones in the respiratory chain. The immediate electron acceptor for the enzyme in this species is believed to be ubiquinone. Couples the redox reaction to proton translocation (for every two electrons transferred, four hydrogen ions are translocated across the cytoplasmic membrane), and thus conserves the redox energy in a proton gradient. This is NADH-quinone oxidoreductase subunit C/D from Cereibacter sphaeroides (strain ATCC 17025 / ATH 2.4.3) (Rhodobacter sphaeroides).